Here is a 305-residue protein sequence, read N- to C-terminus: Probable 5-dehydro-4-deoxyglucarate dehydratase (305 aa).

The protein belongs to the DapA family.

It carries out the reaction 5-dehydro-4-deoxy-D-glucarate + H(+) = 2,5-dioxopentanoate + CO2 + H2O. It functions in the pathway carbohydrate acid metabolism; D-glucarate degradation; 2,5-dioxopentanoate from D-glucarate: step 2/2. In Pseudomonas entomophila (strain L48), this protein is Probable 5-dehydro-4-deoxyglucarate dehydratase.